The sequence spans 148 residues: Cytochrome c-type biogenesis protein CcmE (148 aa).

Topologically, residues 1–7 (MTRKQRR) are cytoplasmic. The chain crosses the membrane as a helical; Signal-anchor for type II membrane protein span at residues 8–28 (LYFVLLGMAALGGAVALVLTA). The Periplasmic portion of the chain corresponds to 29–148 (ISDSLVYFYS…QWNDGKQPKQ (120 aa)). Residues H121 and Y125 each contribute to the heme site.

Belongs to the CcmE/CycJ family.

It is found in the cell inner membrane. In terms of biological role, heme chaperone required for the biogenesis of c-type cytochromes. Transiently binds heme delivered by CcmC and transfers the heme to apo-cytochromes in a process facilitated by CcmF and CcmH. This chain is Cytochrome c-type biogenesis protein CcmE, found in Paramagnetospirillum magneticum (strain ATCC 700264 / AMB-1) (Magnetospirillum magneticum).